The chain runs to 158 residues: MNPIIDLQIASENSQGLPSAQQFSDWVKHALTYEAQTSNIPLTELTIRIVDEAESHHLNLTYRGKDKPTNVLSFPFEVPEGIELPLLGDLIICRQIVEKEALEQKISLDAHWAHLTIHGTLHLLGYDHIDEHEAEQMEGLESDIMQQLGFQDPYLAEK.

Zn(2+) contacts are provided by His118, His122, and His128.

The protein belongs to the endoribonuclease YbeY family. The cofactor is Zn(2+).

The protein localises to the cytoplasm. Its function is as follows. Single strand-specific metallo-endoribonuclease involved in late-stage 70S ribosome quality control and in maturation of the 3' terminus of the 16S rRNA. This Haemophilus ducreyi (strain 35000HP / ATCC 700724) protein is Endoribonuclease YbeY.